Consider the following 180-residue polypeptide: dCTP deaminase, dUMP-forming (180 aa).

Residues 100 to 105 (RSSLGR), Asp-117, 125 to 127 (TLE), Gln-146, Tyr-160, and Gln-167 each bind dCTP. Glu-127 acts as the Proton donor/acceptor in catalysis.

Belongs to the dCTP deaminase family. In terms of assembly, homotrimer.

The enzyme catalyses dCTP + 2 H2O = dUMP + NH4(+) + diphosphate. The protein operates within pyrimidine metabolism; dUMP biosynthesis; dUMP from dCTP: step 1/1. In terms of biological role, bifunctional enzyme that catalyzes both the deamination of dCTP to dUTP and the hydrolysis of dUTP to dUMP without releasing the toxic dUTP intermediate. This chain is dCTP deaminase, dUMP-forming, found in Persephonella marina (strain DSM 14350 / EX-H1).